A 131-amino-acid chain; its full sequence is Protein Turandot M (131 aa).

Positions 1–23 (MNPAIYLSCLVVFSLLLLGKVNA) are cleaved as a signal peptide.

It belongs to the Turandot family.

It localises to the secreted. Functionally, a humoral factor that may play a role in stress tolerance. Requires Mekk1 expression in the fat body to regulate response to septic injury and consequent immune response. This chain is Protein Turandot M, found in Drosophila erecta (Fruit fly).